The sequence spans 576 residues: V-type ATP synthase alpha chain (576 aa).

238-245 (GPFGAGKT) lines the ATP pocket.

Belongs to the ATPase alpha/beta chains family.

The enzyme catalyses ATP + H2O + 4 H(+)(in) = ADP + phosphate + 5 H(+)(out). Its function is as follows. Produces ATP from ADP in the presence of a proton gradient across the membrane. The V-type alpha chain is a catalytic subunit. The protein is V-type ATP synthase alpha chain of Borrelia recurrentis (strain A1).